A 313-amino-acid chain; its full sequence is Porphobilinogen deaminase (313 aa).

Cys242 carries the S-(dipyrrolylmethanemethyl)cysteine modification.

The protein belongs to the HMBS family. Monomer. The cofactor is dipyrromethane.

It catalyses the reaction 4 porphobilinogen + H2O = hydroxymethylbilane + 4 NH4(+). The protein operates within porphyrin-containing compound metabolism; protoporphyrin-IX biosynthesis; coproporphyrinogen-III from 5-aminolevulinate: step 2/4. In terms of biological role, tetrapolymerization of the monopyrrole PBG into the hydroxymethylbilane pre-uroporphyrinogen in several discrete steps. In Salmonella dublin (strain CT_02021853), this protein is Porphobilinogen deaminase.